The chain runs to 183 residues: Pyruvoyl-dependent arginine decarboxylase 2 (183 aa).

S41 carries the pyruvic acid (Ser) modification.

It belongs to the PdaD family. Requires pyruvate as cofactor.

The enzyme catalyses L-arginine + H(+) = agmatine + CO2. This chain is Pyruvoyl-dependent arginine decarboxylase 2 (pdaD2), found in Methanosarcina mazei (strain ATCC BAA-159 / DSM 3647 / Goe1 / Go1 / JCM 11833 / OCM 88) (Methanosarcina frisia).